The sequence spans 438 residues: MPIAKVHARSVYVSRGNPTVEVDVVTETGLHRAIVPSGASTGQHEAVELRDGDKAKWGGKGVLKAVKNVNETIGPALIKENIDVKDQAKVDEFLNKLDGTANKGNLGANAILGVSLAIAKAAAAEKGVPLYVHISDLAGTKKPYVLPVPFQNVLNGGSHAGGRLAFQEFMIVPDTAESFSEGLRQGAEVYQKLKALAKKKYGQSAGNVGDEGGVAPDIQTAEEALDLITEAIEQAGYTGKISIAMDVASSEFYKTDAKKYDLDFKNPDSDPTKWLTYEQLADLYKSLAAKYPIVSIEDPFAEDDWEAWSYFYKTSDFQIVGDDLTVTNPLRIKKAIELKSCNALLLKVNQIGTLTESIQAAKDSYADNWGVMVSHRSGETEDVTIADIAVGLRSGQIKTGAPARSERLAKLNQILRIEEELGENAIYAGKNFRTSVNL.

The substrate site is built by His159 and Glu168. Glu211 functions as the Proton donor in the catalytic mechanism. Mg(2+) contacts are provided by Asp246, Glu297, and Asp322. Glu297 and Asp322 together coordinate substrate. Lys347 serves as the catalytic Proton acceptor. Residues 374–377 (SHRS) and Lys398 each bind substrate.

The protein belongs to the enolase family. In terms of assembly, homodimer. Mg(2+) is required as a cofactor.

The protein localises to the cytoplasm. It carries out the reaction (2R)-2-phosphoglycerate = phosphoenolpyruvate + H2O. It participates in carbohydrate degradation; glycolysis; pyruvate from D-glyceraldehyde 3-phosphate: step 4/5. The sequence is that of Enolase (enoA) from Penicillium citrinum.